The primary structure comprises 84 residues: Acyl carrier protein (84 aa).

Residues 4 to 79 (NEIFEKVQDI…EVVDFIKSKL (76 aa)) form the Carrier domain. Residue serine 39 is modified to O-(pantetheine 4'-phosphoryl)serine.

The protein belongs to the acyl carrier protein (ACP) family. 4'-phosphopantetheine is transferred from CoA to a specific serine of apo-ACP by AcpS. This modification is essential for activity because fatty acids are bound in thioester linkage to the sulfhydryl of the prosthetic group.

It is found in the plastid. The protein localises to the chloroplast. It participates in lipid metabolism; fatty acid biosynthesis. Carrier of the growing fatty acid chain in fatty acid biosynthesis. In Porphyra purpurea (Red seaweed), this protein is Acyl carrier protein.